The chain runs to 285 residues: 4-diphosphocytidyl-2-C-methyl-D-erythritol kinase (285 aa).

The active site involves lysine 12. 95–105 (PMGGGVGGGSS) provides a ligand contact to ATP. Aspartate 137 is an active-site residue.

It belongs to the GHMP kinase family. IspE subfamily.

It catalyses the reaction 4-CDP-2-C-methyl-D-erythritol + ATP = 4-CDP-2-C-methyl-D-erythritol 2-phosphate + ADP + H(+). The protein operates within isoprenoid biosynthesis; isopentenyl diphosphate biosynthesis via DXP pathway; isopentenyl diphosphate from 1-deoxy-D-xylulose 5-phosphate: step 3/6. Catalyzes the phosphorylation of the position 2 hydroxy group of 4-diphosphocytidyl-2C-methyl-D-erythritol. The protein is 4-diphosphocytidyl-2-C-methyl-D-erythritol kinase of Actinobacillus pleuropneumoniae serotype 5b (strain L20).